Here is a 365-residue protein sequence, read N- to C-terminus: Probable ethanolamine-phosphate cytidylyltransferase (365 aa).

The tract at residues 344–365 (EERQRRKMGKNATEQTTIKTYA) is disordered. The segment covering 355 to 365 (ATEQTTIKTYA) has biased composition (polar residues).

The protein belongs to the cytidylyltransferase family.

It carries out the reaction phosphoethanolamine + CTP + H(+) = CDP-ethanolamine + diphosphate. It participates in phospholipid metabolism; phosphatidylethanolamine biosynthesis; phosphatidylethanolamine from ethanolamine: step 2/3. In Schizosaccharomyces pombe (strain 972 / ATCC 24843) (Fission yeast), this protein is Probable ethanolamine-phosphate cytidylyltransferase.